The following is a 707-amino-acid chain: Metal transporter CNNM3 (707 aa).

Residues 11–27 (LGWLFAALCLGNAAGEA) traverse the membrane as a helical segment. Asn-73 is a glycosylation site (N-linked (GlcNAc...) asparagine). The region spanning 130–308 (EAAPPWALGL…DPYSDLSKGV (179 aa)) is the CNNM transmembrane domain. The next 3 helical transmembrane spans lie at 193–213 (CALG…AVLL), 221–241 (AVPA…VVPA), and 261–281 (LAVL…ELAA). 2 CBS domains span residues 318-379 (LTPL…CTPL) and 386-452 (YNHP…ILDE). Residue Ser-661 is modified to Phosphoserine. The segment covering 678–691 (LGEKTTTAAGSSHS) has biased composition (polar residues). Residues 678–707 (LGEKTTTAAGSSHSRPGVPVEGSPGRNPGV) are disordered. Phosphoserine is present on Ser-700.

This sequence belongs to the ACDP family. As to expression, widely expressed. Expressed at higher level in heart and spleen.

It localises to the cell membrane. In terms of biological role, probable metal transporter. The polypeptide is Metal transporter CNNM3 (CNNM3) (Homo sapiens (Human)).